The following is a 373-amino-acid chain: Flagellar P-ring protein (373 aa).

The first 30 residues, Met-1–Ala-30, serve as a signal peptide directing secretion.

It belongs to the FlgI family. As to quaternary structure, the basal body constitutes a major portion of the flagellar organelle and consists of four rings (L,P,S, and M) mounted on a central rod.

It localises to the periplasm. The protein resides in the bacterial flagellum basal body. In terms of biological role, assembles around the rod to form the L-ring and probably protects the motor/basal body from shearing forces during rotation. The chain is Flagellar P-ring protein from Aliivibrio fischeri (strain ATCC 700601 / ES114) (Vibrio fischeri).